Here is a 143-residue protein sequence, read N- to C-terminus: ATP synthase F(0) complex subunit C2, mitochondrial (143 aa).

A mitochondrion-targeting transit peptide spans 1–68 (MYTCAKFVST…RSFQTSAISR (68 aa)). Residues 84-104 (VGVAGSGAGIGTVFGSLIIGY) form a helical membrane-spanning segment. Lys111 carries the post-translational modification N6,N6,N6-trimethyllysine. A helical membrane pass occupies residues 119 to 139 (ILGFALSEAMGLFCLMVAFLI).

Belongs to the ATPase C chain family. F-type ATPases have 2 components, CF(1) - the catalytic core - and CF(0) - the membrane proton channel. CF(1) has five subunits: alpha(3), beta(3), gamma(1), delta(1), epsilon(1). CF(0) has three main subunits: a, b and c. Interacts with DNAJC30; interaction is direct. Post-translationally, trimethylated by ATPSCKMT at Lys-111. Methylation is required for proper incorporation of the C subunit into the ATP synthase complex and mitochondrial respiration.

The protein localises to the mitochondrion membrane. Functionally, mitochondrial membrane ATP synthase (F(1)F(0) ATP synthase or Complex V) produces ATP from ADP in the presence of a proton gradient across the membrane which is generated by electron transport complexes of the respiratory chain. F-type ATPases consist of two structural domains, F(1) - containing the extramembraneous catalytic core and F(0) - containing the membrane proton channel, linked together by a central stalk and a peripheral stalk. During catalysis, ATP synthesis in the catalytic domain of F(1) is coupled via a rotary mechanism of the central stalk subunits to proton translocation. Part of the complex F(0) domain. A homomeric c-ring of probably 10 subunits is part of the complex rotary element. The chain is ATP synthase F(0) complex subunit C2, mitochondrial from Ovis aries (Sheep).